A 1488-amino-acid chain; its full sequence is Chromosome partition protein MukB (1488 aa).

Residue 34–41 (GGNGAGKS) coordinates ATP. 3 coiled-coil regions span residues 326–418 (LEAD…QYNQ), 444–472 (LDTFQAKEQEATEKLLSLEQKMSVAQTAH), and 509–602 (RHLA…QRAP). Residues 666–783 (PGGAEDQRLN…SLPIFGRAAR (118 aa)) are flexible hinge. 3 coiled-coil regions span residues 835 to 923 (EAEI…AKLE), 977 to 1116 (EMLS…AKAG), and 1209 to 1265 (VEAI…LQSV). The interval 1049–1074 (ADSGAEERARQRRDELHAQLSNNRSR) is disordered. The span at 1051-1065 (SGAEERARQRRDELH) shows a compositional bias: basic and acidic residues.

The protein belongs to the SMC family. MukB subfamily. As to quaternary structure, homodimerization via its hinge domain. Binds to DNA via its C-terminal region. Interacts, and probably forms a ternary complex, with MukE and MukF via its C-terminal region. The complex formation is stimulated by calcium or magnesium. Interacts with tubulin-related protein FtsZ.

Its subcellular location is the cytoplasm. The protein localises to the nucleoid. Functionally, plays a central role in chromosome condensation, segregation and cell cycle progression. Functions as a homodimer, which is essential for chromosome partition. Involved in negative DNA supercoiling in vivo, and by this means organize and compact chromosomes. May achieve or facilitate chromosome segregation by condensation DNA from both sides of a centrally located replisome during cell division. This chain is Chromosome partition protein MukB, found in Salmonella paratyphi A (strain ATCC 9150 / SARB42).